A 433-amino-acid chain; its full sequence is Phosphomethylpyrimidine synthase 2 (433 aa).

Substrate-binding positions include Asn66, Met94, Tyr123, His162, 184 to 186 (SRG), 225 to 228 (DALR), and Glu264. A Zn(2+)-binding site is contributed by His268. Residue Tyr291 coordinates substrate. His332 is a Zn(2+) binding site. Residues Cys408, Cys411, and Cys415 each coordinate [4Fe-4S] cluster.

The protein belongs to the ThiC family. Requires [4Fe-4S] cluster as cofactor.

It carries out the reaction 5-amino-1-(5-phospho-beta-D-ribosyl)imidazole + S-adenosyl-L-methionine = 4-amino-2-methyl-5-(phosphooxymethyl)pyrimidine + CO + 5'-deoxyadenosine + formate + L-methionine + 3 H(+). Its pathway is cofactor biosynthesis; thiamine diphosphate biosynthesis. In terms of biological role, catalyzes the synthesis of the hydroxymethylpyrimidine phosphate (HMP-P) moiety of thiamine from aminoimidazole ribotide (AIR) in a radical S-adenosyl-L-methionine (SAM)-dependent reaction. The chain is Phosphomethylpyrimidine synthase 2 from Saccharolobus solfataricus (strain ATCC 35092 / DSM 1617 / JCM 11322 / P2) (Sulfolobus solfataricus).